Reading from the N-terminus, the 166-residue chain is Coiled-coil domain-containing protein 12 (166 aa).

An N-acetylmethionine modification is found at methionine 1. Positions 8–28 (VGRLEEEALRRKERLKALREK) form a coiled coil. Basic and acidic residues predominate over residues 21–53 (RLKALREKTGRKDREDGEPQTKQLREEGEEVGK). Residues 21–55 (RLKALREKTGRKDREDGEPQTKQLREEGEEVGKHR) form a disordered region. Lysine 53 bears the N6-acetyllysine mark. A Glycyl lysine isopeptide (Lys-Gly) (interchain with G-Cter in SUMO2) cross-link involves residue lysine 94. A coiled-coil region spans residues 115 to 144 (DLKRDVAKKLEKLEKRTQRAIAELIRERLK). The tract at residues 146–166 (QEDSLASAVDATTGQEACDSD) is disordered. Phosphoserine occurs at positions 149 and 165.

This is Coiled-coil domain-containing protein 12 (Ccdc12) from Mus musculus (Mouse).